A 509-amino-acid polypeptide reads, in one-letter code: Maturase K (509 aa).

This sequence belongs to the intron maturase 2 family. MatK subfamily.

The protein localises to the plastid. It localises to the chloroplast. Functionally, usually encoded in the trnK tRNA gene intron. Probably assists in splicing its own and other chloroplast group II introns. The sequence is that of Maturase K from Nicotiana rustica (Aztec tobacco).